The sequence spans 794 residues: Interphotoreceptor matrix proteoglycan 1 (794 aa).

An N-terminal signal peptide occupies residues 1 to 20; that stretch reads MHLEAARVIFFLWIFLQVQG. Residues 202 to 213 show a composition bias toward polar residues; sequence MTTAQRNPQLHP. Disordered stretches follow at residues 202–221, 314–355, and 413–449; these read MTTA…RVPT, KGKA…LYPT, and SPEL…AMTS. The region spanning 236–357 is the SEA 1 domain; the sequence is LEQKVELSIS…KQRELYPTAS (122 aa). Basic and acidic residues predominate over residues 332 to 351; the sequence is NKIESEGDPRGTTEEEKQRE. O-linked (GalNAc...) threonine glycosylation is found at Thr425 and Thr439. Residue Ser443 is glycosylated (O-linked (GalNAc...) serine). Thr448 and Thr450 each carry an O-linked (GalNAc...) threonine glycan. The SEA 2 domain occupies 579-692; the sequence is RELVVFFSLR…YSLDVEPADQ (114 aa). A glycan (N-linked (GlcNAc...) asparagine) is linked at Asn624. The Heparin- and hyaluronan-binding signature appears at 629-637; sequence KQLEILNFR. Asn656 carries N-linked (GlcNAc...) asparagine glycosylation.

Highly glycosylated (N- and O-linked carbohydrates and sialic acid).

It is found in the cell projection. It localises to the cilium. The protein resides in the photoreceptor outer segment. The protein localises to the secreted. Its subcellular location is the extracellular space. It is found in the extracellular matrix. It localises to the interphotoreceptor matrix. The protein resides in the photoreceptor inner segment. Its function is as follows. Chondroitin sulfate-, heparin- and hyaluronan-binding protein. May serve to form a basic macromolecular scaffold comprising the insoluble interphotoreceptor matrix. In Bos taurus (Bovine), this protein is Interphotoreceptor matrix proteoglycan 1 (IMPG1).